A 266-amino-acid polypeptide reads, in one-letter code: Enoyl-CoA hydratase EchA19 (266 aa).

Glu120 is an active-site residue. Residue Lys135 is modified to N6-succinyllysine. Glu140 is an active-site residue. Lys142 carries the N6-succinyllysine modification.

It belongs to the enoyl-CoA hydratase/isomerase family. Homotrimer; substrate probably binds in elongated tunnels between the subunits. Succinylated in vitro at pH 8.1, succinylation reduces specific activity of the enzyme 5.5-fold; succinyl-CoA is a downstream by-product of cholesterol degradation. Can be de-succinylated in vitro by NAD-dependent protein deacylase (AC P9WGG3). Succinylation may be a negative feedback regulator of cholesterol metabolism.

It carries out the reaction (22E)-3-oxochola-4,22-dien-24-oyl-CoA + H2O = (22R)-hydroxy-3-oxo-chol-4-ene-24-oyl-CoA. It functions in the pathway steroid metabolism; cholesterol degradation. Its function is as follows. Degradation of the cholesterol side chain involves 3 multistep beta-oxidation cycles, this may be involved in the second cycle. Hydrates 3-OCDO-CoA ((22E)-3-oxo-chol-4,22-dien-24-oyl-CoA) to make (22R)-HOCO-CoA (3-oxo-chol-4-ene-(22R)-hydroxy-24-oyl-CoA). Also acts on octenoyl-CoA. Not active on (E)-3-OCDS-CoA ((E)-3-oxocholest-4,24-dien-26-oyl-CoA) or 3-OPDC-CoA (3-oxo-4,17-pregnadiene-20-carboxyl-CoA). Hydrates the same substrate as ChsH3, but the 2 enzymes make different stereoisomers of the product. The sequence is that of Enoyl-CoA hydratase EchA19 from Mycobacterium tuberculosis (strain ATCC 25618 / H37Rv).